Consider the following 1525-residue polypeptide: Multidrug resistance protein mrp-7 (1525 aa).

Topologically, residues 1-24 (MLSSFCGDGHPFSTGLPNVSICAQ) are extracellular. N-linked (GlcNAc...) asparagine glycosylation is present at Asn-18. The chain crosses the membrane as a helical span at residues 25–45 (HTVLVWVPAAFFLLTLPFLSA). The Cytoplasmic portion of the chain corresponds to 46-66 (QCHLTAQRFARLPFSAHFIIK). The helical transmembrane segment at 67–87 (LLLVAFLAANSLATWCYVLFS) threads the bilayer. Over 88–94 (KNSYAAA) the chain is Extracellular. A helical transmembrane segment spans residues 95-115 (YYVYPGLWVLVWTGTFLVHLI). Residues 116 to 118 (RLR) lie on the Cytoplasmic side of the membrane. A helical transmembrane segment spans residues 119 to 139 (CGLVSSGIQHVTSLIFLLCGA). Topologically, residues 140–165 (PEFYQWIRMENSNSFPNDLTTTDSAQ) are extracellular. Residues 166–186 (FLSIAYLSWYSALILYTFSLC) traverse the membrane as a helical segment. The Cytoplasmic segment spans residues 187 to 346 (FADPRGAKTD…APFWKGMALS (160 aa)). Residues 305–587 (LLASTLKFVS…IALLINQAVQ (283 aa)) form the ABC transmembrane type-1 1 domain. A helical membrane pass occupies residues 347 to 367 (ILMFSVSELRSLILNGYFYIM). Residues 368–434 (FRMGTKIQTS…SCPYQITFAL (67 aa)) lie on the Extracellular side of the membrane. A helical membrane pass occupies residues 435–455 (VYLFITLGYSALPGVVIMVIF). Over 456-535 (VPMNIISSMI…NILDSFNTAS (80 aa)) the chain is Cytoplasmic. The chain crosses the membrane as a helical span at residues 536–556 (PFLVALFSFGTFVLSNPSHLL). Residues 557-561 (TPQIA) lie on the Extracellular side of the membrane. The chain crosses the membrane as a helical span at residues 562–582 (FVSLALFNQLRSPMTMIALLI). Residues 583–953 (NQAVQAVVSN…ATYQLYVKAA (371 aa)) lie on the Cytoplasmic side of the membrane. The 228-residue stretch at 622-849 (VRVENLTASW…RGLFFDFMEE (228 aa)) folds into the ABC transporter 1 domain. Residue 659–666 (GKVGSGKS) participates in ATP binding. A disordered region spans residues 900 to 925 (ELTTQISTMSSPEKPPTGTSPAAATE). A helical membrane pass occupies residues 954–974 (GYLLSIAFIGFFIVYMTLQIL). The ABC transmembrane type-1 2 domain maps to 959-1245 (IAFIGFFIVY…AVRQVSEIEA (287 aa)). Residues 975–1005 (RSFWLSAWSDEYDPDSPSAHPMAKGWRLGVY) lie on the Extracellular side of the membrane. The chain crosses the membrane as a helical span at residues 1006-1026 (GALGFSETACFFVALLALVFV). The Cytoplasmic segment spans residues 1027-1068 (GQRASKNLHGPLIHNLMRSPMSFYDTTPLGRILNRCAKDIET). Residues 1069–1089 (IDMMLPMNFRYLVMCVLQVAF) traverse the membrane as a helical segment. Position 1090 (Thr-1090) is a topological domain, extracellular. A helical membrane pass occupies residues 1091-1111 (LIVIIISTPLFAVVILPLALI). Topologically, residues 1112–1184 (YLIFLRYYVP…RYSSLVSNRW (73 aa)) are cytoplasmic. Residues 1185–1205 (LAVRLEFVGNCIIFFAALFAV) form a helical membrane-spanning segment. The Extracellular segment spans residues 1206 to 1525 (LSKEFGWITS…ADAAEQDKHE (320 aa)). Residue Asn-1228 is glycosylated (N-linked (GlcNAc...) asparagine). In terms of domain architecture, ABC transporter 2 spans 1282–1516 (VKFDGYSTRY…KNSAFAKMVA (235 aa)). 1316-1323 (GRTGAGKS) lines the ATP pocket. N-linked (GlcNAc...) asparagine glycosylation is found at Asn-1358 and Asn-1418.

Belongs to the ABC transporter superfamily. ABCC family. Conjugate transporter (TC 3.A.1.208) subfamily. Expressed in head neurons, including the dopamine (DA) motor neuron, and other cells in the body.

Its subcellular location is the cell membrane. Its function is as follows. Negatively regulates cellular toxicity by mediating the export of environmental toxicants such as methylmercury out of the cell. Plays a role in inhibiting methylmercury-induced dopamine (DA) motor neuron degeneration. Not involved in Mn(2+)- or Al(3+)-associated toxicity. The chain is Multidrug resistance protein mrp-7 from Caenorhabditis elegans.